A 391-amino-acid chain; its full sequence is Arginine biosynthesis bifunctional protein ArgJ 2 (391 aa).

Positions 167 and 180 each coordinate substrate. Residue S180 is the Nucleophile of the active site.

It belongs to the ArgJ family. In terms of assembly, heterotetramer of two alpha and two beta chains.

It is found in the cytoplasm. It catalyses the reaction N(2)-acetyl-L-ornithine + L-glutamate = N-acetyl-L-glutamate + L-ornithine. It carries out the reaction L-glutamate + acetyl-CoA = N-acetyl-L-glutamate + CoA + H(+). It functions in the pathway amino-acid biosynthesis; L-arginine biosynthesis; L-ornithine and N-acetyl-L-glutamate from L-glutamate and N(2)-acetyl-L-ornithine (cyclic): step 1/1. The protein operates within amino-acid biosynthesis; L-arginine biosynthesis; N(2)-acetyl-L-ornithine from L-glutamate: step 1/4. Functionally, catalyzes two activities which are involved in the cyclic version of arginine biosynthesis: the synthesis of N-acetylglutamate from glutamate and acetyl-CoA as the acetyl donor, and of ornithine by transacetylation between N(2)-acetylornithine and glutamate. The protein is Arginine biosynthesis bifunctional protein ArgJ 2 of Streptomyces clavuligerus.